The sequence spans 391 residues: Outer membrane protein 41 (391 aa).

An N-terminal signal peptide occupies residues 1–20 (MKVKYLMLTLVGAIALNASA). Residue Gln21 is modified to Pyrrolidone carboxylic acid. The OmpA-like domain occupies 282–391 (TKTENILTEK…WNRVVIVRSK (110 aa)).

Belongs to the outer membrane OOP (TC 1.B.6) superfamily. In terms of assembly, disulfide-linked heterodimer with Omp40.

The protein resides in the cell outer membrane. May have porin activity and function in peptidoglycan binding. This Porphyromonas gingivalis (strain ATCC BAA-308 / W83) protein is Outer membrane protein 41.